The sequence spans 215 residues: Adenylate kinase (215 aa).

10 to 15 (GAGKGT) lines the ATP pocket. The tract at residues 30-59 (STGDILRANVREGTELGLAAKAYMDKGELV) is NMP. Residues Thr31, Arg36, 57-59 (ELV), 85-88 (GYPR), and Gln92 contribute to the AMP site. The tract at residues 126–162 (GRLMCKCGASYHIISNPPKKDNVCDICGGEVFQRADD) is LID. Arg127 lines the ATP pocket. Zn(2+)-binding residues include Cys130 and Cys132. Residue 135–136 (SY) participates in ATP binding. 2 residues coordinate Zn(2+): Cys149 and Cys152. AMP contacts are provided by Arg159 and Arg170. Lys198 contributes to the ATP binding site.

It belongs to the adenylate kinase family. In terms of assembly, monomer.

It localises to the cytoplasm. The enzyme catalyses AMP + ATP = 2 ADP. It functions in the pathway purine metabolism; AMP biosynthesis via salvage pathway; AMP from ADP: step 1/1. Its function is as follows. Catalyzes the reversible transfer of the terminal phosphate group between ATP and AMP. Plays an important role in cellular energy homeostasis and in adenine nucleotide metabolism. The protein is Adenylate kinase of Methanosarcina acetivorans (strain ATCC 35395 / DSM 2834 / JCM 12185 / C2A).